The chain runs to 544 residues: MSKEIKFGNDSRSKMLNGVNILADAVKITLGPKGRNVVIDKSYGAPQITKDGVTVAKEIELEDKFENMGAQMVKDVASQTNDAAGDGTTTATVLAQAIIADGLKAVAAGMNPMDLKRGIDQTVKAAVAELKKLSTPCSDSKAITQVGTISANSDHEIGEIIARAMQKVGNQGVITVEEGQGLETELDVVEGMQFDRGYLSPYFMTNHESGTVELENPYILLVDKKIGNIRELLPTLEAVAKASKPLLIIAEDVEGEALATLVVNNMRGIVKVCAVKAPGFGDRRKAMLQDIATLTGGTVISEEIGLDMEKVQLEDLGQAKRIVINKDETTIIDGIGDESVINARVSQIKQQIEASTSDYDKEKLQERSAKLAGGVAVIKVGASTEVEMKEKKDRVDDALHATRAAVEEGVVAGGGVALVRVAAILKGLTGENEDQNVGIRVALRAMEAPLRQIVENCGEEASVVANNVRQGEGNYGYNATTGEYGDMLEMGIIDPTKVARSALQFAASVAALMITTECMITDRPVAASAAAPDMGGMGGMGGMM.

ATP-binding positions include 29-32 (TLGP), Lys50, 86-90 (DGTTT), Gly414, and Asp494.

This sequence belongs to the chaperonin (HSP60) family. Forms a cylinder of 14 subunits composed of two heptameric rings stacked back-to-back. Interacts with the co-chaperonin GroES.

It is found in the cytoplasm. The catalysed reaction is ATP + H2O + a folded polypeptide = ADP + phosphate + an unfolded polypeptide.. Together with its co-chaperonin GroES, plays an essential role in assisting protein folding. The GroEL-GroES system forms a nano-cage that allows encapsulation of the non-native substrate proteins and provides a physical environment optimized to promote and accelerate protein folding. The polypeptide is Chaperonin GroEL 2 (Psychromonas ingrahamii (strain DSM 17664 / CCUG 51855 / 37)).